The sequence spans 450 residues: Homogentisate 1,2-dioxygenase (450 aa).

The Proton acceptor role is filled by His-304. The Fe cation site is built by His-347 and Glu-353. The homogentisate site is built by Tyr-362 and His-383. His-383 is a Fe cation binding site.

It belongs to the homogentisate dioxygenase family. Hexamer; dimer of trimers. Fe cation is required as a cofactor.

The catalysed reaction is homogentisate + O2 = 4-maleylacetoacetate + H(+). The protein operates within amino-acid degradation; L-phenylalanine degradation; acetoacetate and fumarate from L-phenylalanine: step 4/6. Functionally, involved in the catabolism of homogentisate (2,5-dihydroxyphenylacetate or 2,5-OH-PhAc), a central intermediate in the degradation of phenylalanine and tyrosine. Catalyzes the oxidative ring cleavage of the aromatic ring of homogentisate to yield maleylacetoacetate. The sequence is that of Homogentisate 1,2-dioxygenase from Burkholderia mallei (strain NCTC 10229).